A 793-amino-acid polypeptide reads, in one-letter code: Protein translocase subunit SecA 2 (793 aa).

ATP-binding positions include Gln-77, 95–99, and Asp-493; that span reads GEGKT.

Belongs to the SecA family. Monomer and homodimer (Potential). Part of the accessory SecA2/SecY2 protein translocation apparatus required to export cell wall protein GspB.

Its subcellular location is the cell membrane. The protein localises to the cytoplasm. It carries out the reaction ATP + H2O + cellular proteinSide 1 = ADP + phosphate + cellular proteinSide 2.. Its function is as follows. Part of the accessory SecA2/SecY2 system specifically required to export GspB, a serine-rich repeat cell wall protein encoded upstream in the same operon. The polypeptide is Protein translocase subunit SecA 2 (Streptococcus gordonii).